A 300-amino-acid chain; its full sequence is 33 kDa chaperonin (300 aa).

2 disulfides stabilise this stretch: C235–C237 and C269–C272.

Belongs to the HSP33 family. In terms of processing, under oxidizing conditions two disulfide bonds are formed involving the reactive cysteines. Under reducing conditions zinc is bound to the reactive cysteines and the protein is inactive.

The protein resides in the cytoplasm. Redox regulated molecular chaperone. Protects both thermally unfolding and oxidatively damaged proteins from irreversible aggregation. Plays an important role in the bacterial defense system toward oxidative stress. The protein is 33 kDa chaperonin of Pseudomonas fluorescens (strain Pf0-1).